A 228-amino-acid polypeptide reads, in one-letter code: Mitochondrial assembly of ribosomal large subunit protein 1 (228 aa).

Positions 53-77 are disordered; it reads SLTRGLHHGPQPEERTAGDARLQPG.

This sequence belongs to the Iojap/RsfS family. As to quaternary structure, associates with the mitochondrial ribosome large subunit (39S) via interaction with MRPL12 and/or MRPL14. The interaction generates steric hindrance that is expected to prevent premature association of the 28S and 39S ribosomal subunits. Identified in a complex composed of MALSU1, MIEF1 upstream open reading frame protein and NDUFAB1; within the trimeric complex, MIEF1 upstream open reading frame protein functions as a bridging scaffold that interacts with MALSU1 on one side, and with NDUFAB1 on the other side. Interacts with MRPL12 and MRPL14.

Its subcellular location is the mitochondrion matrix. Functionally, required for normal mitochondrial ribosome function and mitochondrial translation. May play a role in ribosome biogenesis by preventing premature association of the 28S and 39S ribosomal subunits. Interacts with mitochondrial ribosomal protein uL14m (MRPL14), probably blocking formation of intersubunit bridge B8, preventing association of the 28S and 39S ribosomal subunits. Addition to isolated mitochondrial ribosomal subunits partially inhibits translation, probably by interfering with the association of the 28S and 39S ribosomal subunits and the formation of functional ribosomes. May also participate in the assembly and/or regulation of the stability of the large subunit of the mitochondrial ribosome. May function as a ribosomal silencing factor. In Mus musculus (Mouse), this protein is Mitochondrial assembly of ribosomal large subunit protein 1 (Malsu1).